The chain runs to 105 residues: Co-chaperonin GroES (105 aa).

It belongs to the GroES chaperonin family. As to quaternary structure, heptamer of 7 subunits arranged in a ring. Interacts with the chaperonin GroEL.

The protein localises to the cytoplasm. Functionally, together with the chaperonin GroEL, plays an essential role in assisting protein folding. The GroEL-GroES system forms a nano-cage that allows encapsulation of the non-native substrate proteins and provides a physical environment optimized to promote and accelerate protein folding. GroES binds to the apical surface of the GroEL ring, thereby capping the opening of the GroEL channel. This is Co-chaperonin GroES from Parvibaculum lavamentivorans (strain DS-1 / DSM 13023 / NCIMB 13966).